A 650-amino-acid chain; its full sequence is Threonine--tRNA ligase, chloroplastic/mitochondrial 2 (650 aa).

Zn(2+)-binding residues include Cys347, His398, and His524.

This sequence belongs to the class-II aminoacyl-tRNA synthetase family.

The protein localises to the plastid. The protein resides in the chloroplast. It localises to the mitochondrion. It catalyses the reaction tRNA(Thr) + L-threonine + ATP = L-threonyl-tRNA(Thr) + AMP + diphosphate + H(+). This Arabidopsis thaliana (Mouse-ear cress) protein is Threonine--tRNA ligase, chloroplastic/mitochondrial 2.